Consider the following 105-residue polypeptide: Large ribosomal subunit protein bL21 (105 aa).

Belongs to the bacterial ribosomal protein bL21 family. In terms of assembly, part of the 50S ribosomal subunit. Contacts protein L20.

Its function is as follows. This protein binds to 23S rRNA in the presence of protein L20. The protein is Large ribosomal subunit protein bL21 of Rhizobium rhizogenes (strain K84 / ATCC BAA-868) (Agrobacterium radiobacter).